Consider the following 228-residue polypeptide: Cell surface Cu-only superoxide dismutase 5 (228 aa).

The signal sequence occupies residues Met-1 to Ala-15. N-linked (GlcNAc...) asparagine glycosylation is present at Asn-53. Cu cation-binding residues include His-75 and His-77. A glycan (N-linked (GlcNAc...) asparagine) is linked at Asn-86. Cysteines 87 and 162 form a disulfide. His-93 serves as a coordination point for Cu cation. N-linked (GlcNAc...) asparagine glycosylation occurs at Asn-98. His-153 lines the Cu cation pocket. 5 N-linked (GlcNAc...) asparagine glycosylation sites follow: Asn-156, Asn-164, Asn-176, Asn-181, and Asn-192. A compositionally biased stretch (low complexity) spans Asn-176 to Ala-201. The disordered stretch occupies residues Asn-176–Gly-204. Asn-205 carries the GPI-anchor amidated asparagine lipid modification. Positions Gly-206–Ile-228 are cleaved as a propeptide — removed in mature form.

The protein belongs to the Cu-Zn superoxide dismutase family. In terms of assembly, monomer. The cofactor is Cu cation. The GPI-anchor is attached to the protein in the endoplasmic reticulum and serves to target the protein to the cell surface. There, the glucosamine-inositol phospholipid moiety is cleaved off and the GPI-modified mannoprotein is covalently attached via its lipidless GPI glycan remnant to the 1,6-beta-glucan of the outer cell wall layer.

It localises to the secreted. Its subcellular location is the cell wall. It is found in the membrane. The catalysed reaction is 2 superoxide + 2 H(+) = H2O2 + O2. With respect to regulation, secreted in a disulfide-oxidized form and apo-pools of secreted SOD5 can readily capture extracellular copper for rapid induction of enzyme activity. In terms of biological role, superoxide dismutases serve to convert damaging superoxide radicals, a key form of ROS, to less damaging hydrogen peroxide that can be converted into water by catalase action. Degrades host-derived reactive oxygen species to escape innate immune surveillance. Involved in the occurrence of miconazole-tolerant persisters in biofilms. Persisters are cells that survive high doses of an antimicrobial agent. The unusual attributes of SOD5-like fungal proteins, including the absence of zinc and an open active site that readily captures extracellular copper, make these SODs well suited to meet challenges in zinc and copper availability at the host-pathogen interface. This Candida albicans (strain SC5314 / ATCC MYA-2876) (Yeast) protein is Cell surface Cu-only superoxide dismutase 5 (SOD5).